The chain runs to 127 residues: uncharacterized protein (127 aa).

This is an uncharacterized protein from Haemophilus influenzae (strain ATCC 51907 / DSM 11121 / KW20 / Rd).